A 1396-amino-acid polypeptide reads, in one-letter code: Helicase ARIP4 (1396 aa).

The interval 1–103 is disordered; sequence MSDASISGSE…LQKPANLRRN (103 aa). Positions 11-49 are enriched in acidic residues; that stretch reads PELDPEDMEEEEEDDEDDDEEEEEEEDEEDNDGDDEDDK. The span at 75-84 shows a compositional bias: polar residues; the sequence is RSTTSGQSGQ. In terms of domain architecture, Helicase ATP-binding spans 290-510; it reads RFSGSSGFGC…WCMVDFVRPD (221 aa). 303-310 lines the ATP pocket; it reads HSMGLGKT. The short motif at 461–464 is the DEAH box element; it reads DEGH. The LXXLL motif 1 signature appears at 549 to 553; it reads LHSLL. The Helicase C-terminal domain maps to 717–891; sequence KMVLLFHLIE…RVVDDLNPEV (175 aa). 2 disordered regions span residues 1117-1168 and 1194-1250; these read SGKQ…PDSP and NLGL…STMN. Composition is skewed to polar residues over residues 1128 to 1148 and 1218 to 1238; these read QATS…RHST and DQSS…SYPN. The short motif at 1273–1277 is the LXXLL motif 2 element; sequence LPSLL. Residues 1340–1396 are disordered; that stretch reads GLPTNNPASTFPGYLSSHSNYQASPGTSSRPLPSGETELGSCEEDGRDDDVVEVTGE. Over residues 1355 to 1370 the composition is skewed to polar residues; it reads SSHSNYQASPGTSSRP. The segment covering 1380 to 1396 has biased composition (acidic residues); the sequence is SCEEDGRDDDVVEVTGE.

This sequence belongs to the SNF2/RAD54 helicase family.

It localises to the nucleus. The enzyme catalyses ATP + H2O = ADP + phosphate + H(+). Its function is as follows. DNA helicase that modulates androgen receptor (AR)-dependent transactivation in a promoter-dependent manner. This is Helicase ARIP4 (rad54l2) from Xenopus tropicalis (Western clawed frog).